A 176-amino-acid polypeptide reads, in one-letter code: Nucleoside triphosphate/diphosphate phosphatase (176 aa).

R23 functions as the Proton donor in the catalytic mechanism. Positions 87, 103, 105, 107, 120, and 123 each coordinate Mg(2+).

The protein belongs to the Ntdp family. Mg(2+) serves as cofactor.

The enzyme catalyses a ribonucleoside 5'-triphosphate + H2O = a ribonucleoside 5'-diphosphate + phosphate + H(+). The catalysed reaction is a ribonucleoside 5'-diphosphate + H2O = a ribonucleoside 5'-phosphate + phosphate + H(+). Has nucleoside phosphatase activity towards nucleoside triphosphates and nucleoside diphosphates. The sequence is that of Nucleoside triphosphate/diphosphate phosphatase from Bacillus pumilus (strain SAFR-032).